Consider the following 786-residue polypeptide: Neprilysin-3 (786 aa).

Residues 1 to 52 lie on the Cytoplasmic side of the membrane; sequence MTRYKQTEFTEDDSSSIGGIQLNEATGHTGMQIRYHTARATWNWRSRNKTEK. A helical; Signal-anchor for type II membrane protein transmembrane segment spans residues 53 to 73; it reads WLLITTFVMAITIFTLLIVLF. The Extracellular segment spans residues 74–786; the sequence is TDGGSSDATK…MNPTEKCEVW (713 aa). One can recognise a Peptidase M13 domain in the interval 102–786; sequence PCLNKHCIFA…MNPTEKCEVW (685 aa). Intrachain disulfides connect cysteine 103/cysteine 108, cysteine 126/cysteine 771, cysteine 134/cysteine 731, cysteine 190/cysteine 450, and cysteine 659/cysteine 783. Residues asparagine 216, asparagine 226, asparagine 256, asparagine 279, asparagine 305, asparagine 325, asparagine 356, asparagine 388, asparagine 496, and asparagine 569 are each glycosylated (N-linked (GlcNAc...) asparagine). Histidine 622 serves as a coordination point for Zn(2+). Residue glutamate 623 is part of the active site. Histidine 626 and glutamate 682 together coordinate Zn(2+). Aspartate 686 serves as the catalytic Proton donor. The N-linked (GlcNAc...) asparagine glycan is linked to asparagine 715.

This sequence belongs to the peptidase M13 family. It depends on Zn(2+) as a cofactor.

It localises to the cell membrane. The catalysed reaction is Preferential cleavage of polypeptides between hydrophobic residues, particularly with Phe or Tyr at P1'.. Metalloendoprotease which is required in the dorsal paired medial neurons for the proper formation of long-term (LTM) and middle-term memories (MTM). Also required in the mushroom body neurons where it functions redundantly with neprilysins Nep2 and Nep4 in normal LTM formation. The polypeptide is Neprilysin-3 (Drosophila melanogaster (Fruit fly)).